A 349-amino-acid polypeptide reads, in one-letter code: Decapping nuclease RAI1 (349 aa).

Glu-157 contacts a divalent metal cation. Glu-205 contacts substrate. A divalent metal cation is bound by residues Asp-207, Glu-222, and Leu-223. Positions 224 and 248 each coordinate substrate.

This sequence belongs to the DXO/Dom3Z family. Interacts with RAT1; the interaction is direct, stabilizes RAT1 protein structure and stimulates its exoribonuclease activity. The interaction also stimulates RAI1 pyrophosphohydrolase activity, probably by recruiting it to mRNA substrates. Requires a divalent metal cation as cofactor.

Its subcellular location is the nucleus. It carries out the reaction a 5'-end NAD(+)-phospho-ribonucleoside in mRNA + H2O = a 5'-end phospho-ribonucleoside in mRNA + NAD(+) + H(+). The catalysed reaction is a 5'-end (N(7)-methyl 5'-triphosphoguanosine)-ribonucleoside-ribonucleotide in mRNA + H2O = a (N(7)-methyl 5'-triphosphoguanosine)-nucleoside + a 5'-end phospho-ribonucleoside in mRNA + H(+). The enzyme catalyses a 5'-end triphospho-ribonucleoside in mRNA + H2O = a 5'-end phospho-ribonucleoside in mRNA + diphosphate + H(+). Its function is as follows. Decapping enzyme for NAD-capped RNAs: specifically hydrolyzes the nicotinamide adenine dinucleotide (NAD) cap from a subset of RNAs by removing the entire NAD moiety from the 5'-end of an NAD-capped RNA. The NAD-cap is present at the 5'-end of some RNAs and snoRNAs. In contrast to the canonical 5'-end N7 methylguanosine (m7G) cap, the NAD cap promotes mRNA decay. Also acts as a non-canonical decapping enzyme that removes the entire cap structure of m7G capped or incompletely capped RNAs. Has decapping activity toward incomplete 5'-end m7G cap mRNAs such as unmethylated 5'-end-capped RNA (cap0), while it has no activity toward 2'-O-ribose methylated m7G cap (cap1). Also possesses RNA 5'-pyrophosphohydrolase activity by hydrolyzing the 5'-end triphosphate to release pyrophosphates. Stimulates exoribonuclease activity of Rat1, allowing it to degrade RNAs with stable secondary structure more effectively. The sequence is that of Decapping nuclease RAI1 (RAI1) from Yarrowia lipolytica (strain CLIB 122 / E 150) (Yeast).